A 159-amino-acid chain; its full sequence is Nucleoside diphosphate kinase (159 aa).

5 residues coordinate ATP: Lys-14, Phe-62, Arg-90, Thr-96, and Arg-107. His-123 acts as the Pros-phosphohistidine intermediate in catalysis.

Belongs to the NDK family. The cofactor is Mg(2+).

The protein resides in the cytoplasm. The catalysed reaction is a 2'-deoxyribonucleoside 5'-diphosphate + ATP = a 2'-deoxyribonucleoside 5'-triphosphate + ADP. It carries out the reaction a ribonucleoside 5'-diphosphate + ATP = a ribonucleoside 5'-triphosphate + ADP. Major role in the synthesis of nucleoside triphosphates other than ATP. The ATP gamma phosphate is transferred to the NDP beta phosphate via a ping-pong mechanism, using a phosphorylated active-site intermediate. In Pyrococcus abyssi (strain GE5 / Orsay), this protein is Nucleoside diphosphate kinase.